The chain runs to 903 residues: MSNFRLILETEGGKRVLCESIVLHFAFMFQTEIVPVCNDEFTLSSCVPTLDFDVDVLSAAYGDGLEISSPGLRCCIAWPPMYALTLGEFYHFHTHRWVSAYDWSSLLDTDEFLSAIGYAHPIYRDPNPDYDPYVMHSSTGKTIAVDTVTEKVYIIAESLVQFFNIGLRQFPPFAEAELDPEQEKMWFGETKCGREEFILLQRNLPAMKDYVAKHCGKRIRVDAFQDFDFSFCSLSDIYYLTGPGILEKITEKDYAIIGTCARSQAEPNCRAAIVMGSNCHIYIYVENRISKVSKSLRTFIRRGFDELLYKEKYSLDWNDDTLFYISDTETENLNRMLNGELPVLRSKPRHMCVRKDRLVKDRSKILFAVRLDEEDSLTVKFITKFLTPVFVGRLPATSRFVVPVSCARLTNGLQGTAAARFGIKGLHPSSDCVVWNRLIDYEYETYKYPSTYVRADQIADMVKNLKFMDNFDEKWQCITKLAFIGLYAGASLFNFASKPTLGYWCRYLCEYASMLLFQFESKLKELTKESTRQLGGYNLCHWGQELKDCLENKSDVFFRYDFFERIESCLIEHFMLLCGCVECRRMFIMYNKRGRKCDFGHCVRIQCFPMIGSIRLPAFLHLGEPYSVSLSSLIAKDLGLSMIEGQIEHSRLPISLQISVTPDKKALLTFLTNIVFIVFVVNTLYRVINAELDIYYDLFTEEVGKLCVTMEEEMKLGRNGCLGDLCYFSSMKQMKEIVRCPGEKSQFILKCWEALRIGFSVPAYKDYDETRFMEMFFLHHLHIKRFHEHNDRDLVSSDNLIPGFFIVNTHEENFLQRLQRVVLPVAEDYLTNTRCINGTMAFFFSGLKYFGSGNHRGVQISPEKDVRAIGYKLGSLDVLRDDYKYYEYAPDCAGELNGHDGDE.

The chain crosses the membrane as a helical span at residues 665-685; sequence KALLTFLTNIVFIVFVVNTLY.

This sequence belongs to the herpesviridae US22 family.

The protein localises to the host membrane. In Human herpesvirus 6B (strain Z29) (HHV-6 variant B), this protein is Protein U7 (U7).